A 377-amino-acid polypeptide reads, in one-letter code: ATP synthase gamma chain, chloroplastic (377 aa).

A chloroplast-targeting transit peptide spans methionine 1–cysteine 55. Residues proline 30–proline 52 form a disordered region. The span at asparagine 37–proline 52 shows a compositional bias: low complexity. Residue cysteine 143 is part of the active site. Cysteine 253 and cysteine 259 are oxidised to a cystine.

The protein belongs to the ATPase gamma chain family. F-type ATPases have 2 components, CF(1) - the catalytic core - and CF(0) - the membrane proton channel. CF(1) has five subunits: alpha(3), beta(3), gamma(1), delta(1), epsilon(1). CF(0) has four main subunits: a, b, b' and c.

The protein localises to the plastid. The protein resides in the chloroplast thylakoid membrane. Produces ATP from ADP in the presence of a proton gradient across the membrane. The gamma chain is believed to be important in regulating ATPase activity and the flow of protons through the CF(0) complex. This is ATP synthase gamma chain, chloroplastic (ATPC) from Nicotiana tabacum (Common tobacco).